An 85-amino-acid polypeptide reads, in one-letter code: MDPKKIARINELAKKKKTEGLTPEEKVEQAKLREEYIEGYRRAVRHHIEGIKIVDEKGNDVTPEKLRQVQREKGLHGRSLDDPNS.

The interval 62 to 85 (TPEKLRQVQREKGLHGRSLDDPNS) is disordered.

The protein belongs to the UPF0291 family.

It is found in the cytoplasm. The sequence is that of UPF0291 protein SPH_1589 from Streptococcus pneumoniae (strain Hungary19A-6).